Consider the following 318-residue polypeptide: ADP-L-glycero-D-manno-heptose-6-epimerase (318 aa).

Residues 10-11 (FI), 31-32 (DD), K38, K53, 80-84 (EGACS), and N97 contribute to the NADP(+) site. The Proton acceptor role is filled by Y144. K148 serves as a coordination point for NADP(+). N173 contributes to the substrate binding site. V174 and K182 together coordinate NADP(+). K182 (proton acceptor) is an active-site residue. Substrate-binding positions include K184, H191, 205 to 208 (FGAW), R218, and Y282.

It belongs to the NAD(P)-dependent epimerase/dehydratase family. HldD subfamily. Homopentamer. The cofactor is NADP(+).

It catalyses the reaction ADP-D-glycero-beta-D-manno-heptose = ADP-L-glycero-beta-D-manno-heptose. It functions in the pathway nucleotide-sugar biosynthesis; ADP-L-glycero-beta-D-manno-heptose biosynthesis; ADP-L-glycero-beta-D-manno-heptose from D-glycero-beta-D-manno-heptose 7-phosphate: step 4/4. Its function is as follows. Catalyzes the interconversion between ADP-D-glycero-beta-D-manno-heptose and ADP-L-glycero-beta-D-manno-heptose via an epimerization at carbon 6 of the heptose. In Chromohalobacter salexigens (strain ATCC BAA-138 / DSM 3043 / CIP 106854 / NCIMB 13768 / 1H11), this protein is ADP-L-glycero-D-manno-heptose-6-epimerase.